The following is a 156-amino-acid chain: Ribosome-binding factor A (156 aa).

The tract at residues 124–156 (TRAEYAGEAQPYRLEEEPEGSGDEVPPPGGDQR) is disordered.

The protein belongs to the RbfA family. As to quaternary structure, monomer. Binds 30S ribosomal subunits, but not 50S ribosomal subunits or 70S ribosomes.

Its subcellular location is the cytoplasm. Functionally, one of several proteins that assist in the late maturation steps of the functional core of the 30S ribosomal subunit. Associates with free 30S ribosomal subunits (but not with 30S subunits that are part of 70S ribosomes or polysomes). Required for efficient processing of 16S rRNA. May interact with the 5'-terminal helix region of 16S rRNA. The polypeptide is Ribosome-binding factor A (Salinispora tropica (strain ATCC BAA-916 / DSM 44818 / JCM 13857 / NBRC 105044 / CNB-440)).